The chain runs to 449 residues: Chromogranin-A (449 aa).

The N-terminal stretch at methionine 1–alanine 18 is a signal peptide. Cysteines 35 and 56 form a disulfide. The segment at alanine 87–alanine 431 is disordered. Serine 99 is modified (phosphoserine). The segment covering valine 107–glutamate 140 has biased composition (basic and acidic residues). The residue at position 142 (serine 142) is a Phosphoserine. Serine 185 carries O-linked (GalNAc...) serine glycosylation. Residue tyrosine 191 is modified to Phosphotyrosine. Serine 200 carries the post-translational modification Phosphoserine. Serine 204 carries O-linked (GalNAc...) serine glycosylation. At serine 215 the chain carries Phosphoserine. The segment covering glutamate 233–proline 242 has biased composition (basic and acidic residues). A glycan (O-linked (GalNAc...) threonine) is linked at threonine 249. Over residues glycine 279 to glutamine 297 the composition is skewed to basic and acidic residues. The residue at position 295 (serine 295) is a Phosphoserine. Glycine 312 is modified (glycine amide). 3 positions are modified to phosphoserine: serine 315, serine 325, and serine 363. Positions glutamine 323–glutamate 351 are enriched in basic and acidic residues. The residue at position 364 (methionine 364) is a Methionine sulfoxide. Residues serine 390, serine 394, serine 416, and serine 430 each carry the phosphoserine modification. Over residues tyrosine 406 to aspartate 423 the composition is skewed to basic and acidic residues. Residue serine 416 is glycosylated (O-linked (Xyl...) (chondroitin sulfate) serine).

Belongs to the chromogranin/secretogranin protein family. As to quaternary structure, self-interacts; self-assembly is promoted in vitro by chondroitin sulfate attachment which occurs at mildly acidic pH conditions. Interacts with SCG3. Interacts with ITPR1 in the secretory granules. In terms of processing, in secretory granules, is attacked at both N- and C-terminal sides by proteolytic enzymes generating numerous peptides of various activities. Proteolytic processing can give rise to additional longer forms of catestatin peptides which display a less potent catecholamine release-inhibitory activity. Post-translationally, O-glycosylated; contains chondroitin sulfate (CS). CS attachment is pH-dependent, being observed at mildly acidic conditions of pH 5 but not at neutral pH, and promotes self-assembly in vitro. As to expression, highest concentration of GE-25 found in adrenal medulla with lower levels present in the pituitary, the intestinal mucosa and the pancreas. Also found in the brain.

The protein resides in the secreted. Its subcellular location is the cytoplasmic vesicle. It localises to the secretory vesicle. It is found in the neuronal dense core vesicle. Functionally, strongly inhibits glucose induced insulin release from the pancreas. In terms of biological role, completely inhibits catecholamine release from chromaffin cells. Its function is as follows. Has antibacterial activity against M.luteus. Not active against E.coli. Inhibits catecholamine release from chromaffin cells and noradrenergic neurons by acting as a non-competitive nicotinic cholinergic antagonist. Displays antibacterial activity against Gram-positive bacteria M.luteus and B.megaterium, and Gram-negative bacteria E.coli, and antifungal activity against a variety of filamentous fungi including A.fumigatus, N.hematococca, F.culmorum, F.oxyporum, T.mentagrophytes and several forms of Candida: C.albicans, C.tropicalis, C.glabrata and C.neoform. Can induce mast cell migration, degranulation and production of cytokines and chemokines. Functionally, has antibacterial activity against Gram-positive bacteria M.luteus, B.megaterium. Not active against Gram-positive bacteria B.cereus, B.subtilis, S.pyogenes, M.fortuitum, S.aureus and L.monocytogenes and against Gram-negative bacteria E.coli, E.cloacae, S.typhimurium, K.pneumoniae and P.aeruginosa. Possesses antifungal activity against N.crassa, A.fumigatus, A.brassicicola, N.hematococca, F.culmorum and F.oxyporum and against the yeast S.cerevisiae and C.albicans. Inactive against A.benhamiae. In terms of biological role, has antifungal activity against N.crassa, A.fumigatus, A.brassicicola, N.hematococca, F.culmorum, F.oxyporum, A.benhamiae, C.neoformans, as well as against yeasts C.albicans, and C.tropicalis. Seems to be inactive against C.glabrata. Interacts with the fungal cell wall, crosses the plasma membrane and accumulates in fungal cells where it inhibits calcineurin activity. Its function is as follows. Regulates granule biogenesis in endocrine cells by up-regulating the transcription of protease nexin 1 (SERPINE2) via a cAMP-PKA-SP1 pathway. This leads to inhibition of granule protein degradation in the Golgi complex which in turn promotes granule formation. In Bos taurus (Bovine), this protein is Chromogranin-A (CHGA).